A 434-amino-acid polypeptide reads, in one-letter code: Protein arginine N-methyltransferase 2 (434 aa).

The disordered stretch occupies residues 155 to 198; the sequence is IQGEETTEEERKEEEPSNTSDIIDEQKVEQPKEDLKEDPSSNQE. Over residues 178–193 the composition is skewed to basic and acidic residues; the sequence is DEQKVEQPKEDLKEDP. The 242-residue stretch at 193 to 434 folds into the RMT2 domain; that stretch reads PSSNQETYLK…YHPEARFMDV (242 aa). Residues Tyr200, Met230, 258-263, 279-281, 306-307, and Asp327 each bind S-adenosyl-L-methionine; these read FGMGII, EAH, and WQ.

It belongs to the class I-like SAM-binding methyltransferase superfamily. RMT2 methyltransferase family. Monomer.

Its subcellular location is the cytoplasm. The protein localises to the nucleus. In terms of biological role, S-adenosyl-L-methionine-dependent protein-arginine N-methyltransferase that methylates the delta-nitrogen atom of arginine residues to form N5-methylarginine (type IV) in target proteins. Monomethylates ribosomal protein L12. This is Protein arginine N-methyltransferase 2 from Debaryomyces hansenii (strain ATCC 36239 / CBS 767 / BCRC 21394 / JCM 1990 / NBRC 0083 / IGC 2968) (Yeast).